The following is an 86-amino-acid chain: Neurotoxin 8-related gene product 1/2/3 (86 aa).

Residues 1–19 (MNYLTMISLALLVMTGVES) form the signal peptide. The LCN-type CS-alpha/beta domain occupies 22 to 84 (RDAYIADNKN…VPIKVPGKCN (63 aa)). Cystine bridges form between Cys32-Cys83, Cys36-Cys56, Cys42-Cys66, and Cys46-Cys68. Asn84 is subject to Asparagine amide.

This sequence belongs to the long (4 C-C) scorpion toxin superfamily. Sodium channel inhibitor family. Alpha subfamily. Expressed by the venom gland.

Its subcellular location is the secreted. In terms of biological role, binds voltage-dependently at site-3 of sodium channels (Nav) and inhibits the inactivation of the activated channels, thereby blocking neuronal transmission. The protein is Neurotoxin 8-related gene product 1/2/3 (NTVIIIrgp1) of Androctonus mauritanicus mauritanicus (Scorpion).